Consider the following 313-residue polypeptide: Methylenetetrahydrofolate dehydrogenase [NAD(+)] (313 aa).

The active site involves Cys-152. NAD(+) contacts are provided by residues 187–188, 210–211, and 270–272; these read RS, DI, and FAG.

Belongs to the tetrahydrofolate dehydrogenase/cyclohydrolase family. As to quaternary structure, homodimer.

It catalyses the reaction (6R)-5,10-methylene-5,6,7,8-tetrahydrofolate + NAD(+) = (6R)-5,10-methenyltetrahydrofolate + NADH. The protein operates within one-carbon metabolism; tetrahydrofolate interconversion. Functionally, catalyzes oxidation of cytoplasmic one-carbon units for purine biosynthesis. This is Methylenetetrahydrofolate dehydrogenase [NAD(+)] (thfA) from Dictyostelium discoideum (Social amoeba).